An 815-amino-acid polypeptide reads, in one-letter code: DNA gyrase subunit B (815 aa).

Residues 1–21 (MEKTPATGSAVAPPPVEYGTD) are disordered. The 116-residue stretch at 430 to 545 (SELYIVEGDS…AISTSRSRRS (116 aa)) folds into the Toprim domain. 3 residues coordinate Mg(2+): glutamate 436, aspartate 509, and aspartate 511.

Belongs to the type II topoisomerase GyrB family. As to quaternary structure, heterotetramer, composed of two GyrA and two GyrB chains. In the heterotetramer, GyrA contains the active site tyrosine that forms a transient covalent intermediate with DNA, while GyrB binds cofactors and catalyzes ATP hydrolysis. It depends on Mg(2+) as a cofactor. The cofactor is Mn(2+). Ca(2+) serves as cofactor.

The protein localises to the cytoplasm. The enzyme catalyses ATP-dependent breakage, passage and rejoining of double-stranded DNA.. In terms of biological role, a type II topoisomerase that negatively supercoils closed circular double-stranded (ds) DNA in an ATP-dependent manner to modulate DNA topology and maintain chromosomes in an underwound state. Negative supercoiling favors strand separation, and DNA replication, transcription, recombination and repair, all of which involve strand separation. Also able to catalyze the interconversion of other topological isomers of dsDNA rings, including catenanes and knotted rings. Type II topoisomerases break and join 2 DNA strands simultaneously in an ATP-dependent manner. This Myxococcus xanthus protein is DNA gyrase subunit B.